The sequence spans 394 residues: Elongation factor Tu 1 (394 aa).

The tr-type G domain occupies 10–204; the sequence is KPHVNVGTIG…ALDTYIPEPA (195 aa). The tract at residues 19 to 26 is G1; sequence GHVDHGKT. A GTP-binding site is contributed by 19–26; the sequence is GHVDHGKT. Residue Thr-26 participates in Mg(2+) binding. A G2 region spans residues 60-64; it reads GITIN. Residues 81–84 form a G3 region; that stretch reads DCPG. GTP is bound by residues 81–85 and 136–139; these read DCPGH and NKCD. Residues 136–139 form a G4 region; that stretch reads NKCD. The segment at 174 to 176 is G5; that stretch reads SAL.

Belongs to the TRAFAC class translation factor GTPase superfamily. Classic translation factor GTPase family. EF-Tu/EF-1A subfamily. In terms of assembly, monomer.

The protein resides in the cytoplasm. It catalyses the reaction GTP + H2O = GDP + phosphate + H(+). In terms of biological role, GTP hydrolase that promotes the GTP-dependent binding of aminoacyl-tRNA to the A-site of ribosomes during protein biosynthesis. In Shewanella frigidimarina (strain NCIMB 400), this protein is Elongation factor Tu 1.